Here is a 103-residue protein sequence, read N- to C-terminus: Small ribosomal subunit protein uS10 (103 aa).

This sequence belongs to the universal ribosomal protein uS10 family. Part of the 30S ribosomal subunit.

Functionally, involved in the binding of tRNA to the ribosomes. The polypeptide is Small ribosomal subunit protein uS10 (Chlorobaculum parvum (strain DSM 263 / NCIMB 8327) (Chlorobium vibrioforme subsp. thiosulfatophilum)).